A 156-amino-acid polypeptide reads, in one-letter code: Small ribosomal subunit protein uS7 (156 aa).

Belongs to the universal ribosomal protein uS7 family. In terms of assembly, part of the 30S ribosomal subunit. Contacts proteins S9 and S11.

Functionally, one of the primary rRNA binding proteins, it binds directly to 16S rRNA where it nucleates assembly of the head domain of the 30S subunit. Is located at the subunit interface close to the decoding center, probably blocks exit of the E-site tRNA. The sequence is that of Small ribosomal subunit protein uS7 from Shewanella loihica (strain ATCC BAA-1088 / PV-4).